Reading from the N-terminus, the 179-residue chain is TPD1 protein homolog 1 (179 aa).

An N-terminal signal peptide occupies residues 1 to 30; that stretch reads MRMEHIYKFQHWLFFIGLGVLLSLSLSVKA.

This chain is TPD1 protein homolog 1, found in Arabidopsis thaliana (Mouse-ear cress).